A 678-amino-acid polypeptide reads, in one-letter code: Secretin ExeD (678 aa).

Residues 1–25 (MINKGKGWRLATVAAALMMAGSAWA) form the signal peptide. An N0 region spans residues 26 to 122 (TEYSASFKNA…VVDETNPGIG (97 aa)). Residues 124–188 (EMVTRVVPVR…EVVRRVDKAG (65 aa)) form an N1 region. Residues 189-264 (DQEVDIIKLK…MVRQLDRDLQ (76 aa)) form an N2 region. An N3 region spans residues 267–348 (GNTRVFYLKY…ELEQVVAKLD (82 aa)). The interval 353-602 (QVLVEAIIVE…VFIRPTILRD (250 aa)) is secretin. The s domain stretch occupies residues 604–678 (NVYSGISSNK…GVQPFVQGNK (75 aa)).

It belongs to the bacterial secretin family. GSP D subfamily. Forms a cylindrical channel with 15 subunits.

It localises to the cell outer membrane. In terms of biological role, involved in a type II secretion system (T2SS, formerly general secretion pathway, GSP) for the export of proteins. This subunit forms the outer membrane channel. The protein is Secretin ExeD (exeD) of Aeromonas hydrophila.